Consider the following 602-residue polypeptide: Phosphoenolpyruvate carboxykinase [GTP] (602 aa).

Substrate is bound by residues arginine 89 and 211–213 (YAG). The Mn(2+) site is built by lysine 220 and histidine 239. Serine 260 provides a ligand contact to substrate. 261–266 (GSGKTS) is a GTP binding site. The active site involves serine 262. Residue aspartate 277 coordinates Mn(2+). 367–369 (NAR) lines the substrate pocket. Residues arginine 369 and arginine 400 each coordinate GTP.

This sequence belongs to the phosphoenolpyruvate carboxykinase [GTP] family. Mn(2+) serves as cofactor.

It localises to the cytoplasm. It carries out the reaction oxaloacetate + GTP = phosphoenolpyruvate + GDP + CO2. It functions in the pathway carbohydrate biosynthesis; gluconeogenesis. Its function is as follows. Catalyzes the conversion of oxaloacetate (OAA) to phosphoenolpyruvate (PEP), the rate-limiting step in the metabolic pathway that produces glucose from lactate and other precursors derived from the citric acid cycle. The sequence is that of Phosphoenolpyruvate carboxykinase [GTP] from Sulfurisphaera tokodaii (strain DSM 16993 / JCM 10545 / NBRC 100140 / 7) (Sulfolobus tokodaii).